Here is a 413-residue protein sequence, read N- to C-terminus: Divalent metal cation transporter MntH (413 aa).

The next 11 helical transmembrane spans lie at 19-39 (LALM…GNFA), 46-66 (ASFG…AMLI), 94-114 (VWFY…AEFI), 122-142 (LVLG…TFLI), 156-176 (VIGG…IFSQ), 196-216 (AVFL…IYLH), 241-261 (IAMT…AAAF), 290-310 (IFGL…TLAG), 329-349 (AITM…TRIL), 350-370 (VMSQ…LLIF), and 389-409 (IGWA…VGSL).

Belongs to the NRAMP family.

The protein localises to the cell inner membrane. In terms of biological role, h(+)-stimulated, divalent metal cation uptake system. The chain is Divalent metal cation transporter MntH from Klebsiella pneumoniae subsp. pneumoniae (strain ATCC 700721 / MGH 78578).